The chain runs to 249 residues: Ubiquinone biosynthesis protein COQ4 homolog, mitochondrial (249 aa).

4 residues coordinate Zn(2+): His134, Asp135, His138, and Glu150.

The protein belongs to the COQ4 family. As to quaternary structure, component of a multi-subunit COQ enzyme complex. The cofactor is Zn(2+).

Its subcellular location is the mitochondrion inner membrane. It catalyses the reaction a 4-hydroxy-3-methoxy-5-(all-trans-polyprenyl)benzoate + H(+) = a 2-methoxy-6-(all-trans-polyprenyl)phenol + CO2. It participates in cofactor biosynthesis; ubiquinone biosynthesis. Lyase that catalyzes the C1-decarboxylation of 4-hydroxy-3-methoxy-5-(all-trans-polyprenyl)benzoic acid into 2-methoxy-6-(all-trans-polyprenyl)phenol during ubiquinone biosynthesis. In Trypanosoma brucei brucei (strain 927/4 GUTat10.1), this protein is Ubiquinone biosynthesis protein COQ4 homolog, mitochondrial.